Reading from the N-terminus, the 380-residue chain is Carbamoyl phosphate synthase small chain (380 aa).

A CPSase region spans residues Met1–Glu184. L-glutamine contacts are provided by Ser55, Gly236, and Gly238. Residues Thr188 to Ala380 form the Glutamine amidotransferase type-1 domain. Cys264 (nucleophile) is an active-site residue. L-glutamine-binding residues include Phe265, Gln268, Asn306, Gly308, and Phe309. Catalysis depends on residues His354 and Glu356.

Belongs to the CarA family. In terms of assembly, composed of two chains; the small (or glutamine) chain promotes the hydrolysis of glutamine to ammonia, which is used by the large (or ammonia) chain to synthesize carbamoyl phosphate. Tetramer of heterodimers (alpha,beta)4.

The catalysed reaction is hydrogencarbonate + L-glutamine + 2 ATP + H2O = carbamoyl phosphate + L-glutamate + 2 ADP + phosphate + 2 H(+). The enzyme catalyses L-glutamine + H2O = L-glutamate + NH4(+). It functions in the pathway amino-acid biosynthesis; L-arginine biosynthesis; carbamoyl phosphate from bicarbonate: step 1/1. The protein operates within pyrimidine metabolism; UMP biosynthesis via de novo pathway; (S)-dihydroorotate from bicarbonate: step 1/3. Its function is as follows. Small subunit of the glutamine-dependent carbamoyl phosphate synthetase (CPSase). CPSase catalyzes the formation of carbamoyl phosphate from the ammonia moiety of glutamine, carbonate, and phosphate donated by ATP, constituting the first step of 2 biosynthetic pathways, one leading to arginine and/or urea and the other to pyrimidine nucleotides. The small subunit (glutamine amidotransferase) binds and cleaves glutamine to supply the large subunit with the substrate ammonia. The protein is Carbamoyl phosphate synthase small chain of Streptomyces coelicolor (strain ATCC BAA-471 / A3(2) / M145).